Here is a 122-residue protein sequence, read N- to C-terminus: Ribosome-binding factor A (122 aa).

It belongs to the RbfA family. Monomer. Binds 30S ribosomal subunits, but not 50S ribosomal subunits or 70S ribosomes.

It is found in the cytoplasm. Functionally, one of several proteins that assist in the late maturation steps of the functional core of the 30S ribosomal subunit. Associates with free 30S ribosomal subunits (but not with 30S subunits that are part of 70S ribosomes or polysomes). Required for efficient processing of 16S rRNA. May interact with the 5'-terminal helix region of 16S rRNA. This chain is Ribosome-binding factor A, found in Halothermothrix orenii (strain H 168 / OCM 544 / DSM 9562).